A 553-amino-acid chain; its full sequence is MPTVHLLDYVAGNVRSLVNAINKVGYEVEWVRSPSDLKDVEKLILPGVGHFGHCLSQLSSGGYLQPIREHIASGKPFMGICVGLQSLFESSEEDPNIPGLGTIPARLRKFDAKTKSVPHIGWNSATDTRIDSTGGQTFYGLSPSSKYYYVHSYAAPYEPGILEKDGWLVATASYGEEKFIGAIARDNIFATQFHPEKSGQAGLRTLRAFLDGAQLHSVTLEDSILTGEKNGLTRRIIACLDVRTNDVGDLVVTKGDQYDVREKDGADAGGQVRNLGKPVDMAKKYYEQGADEVTFLNITSFRNCPLADLPMLEILRRTSETVFVPLTIGGGIRDTVDTDGTHIPALDVASMYFKSGADKVSIGSDAVVAAEDYYAAGKVLSGKTAIETISKAYGNQAVVVSVDPKRVYVSQPEDTKHRTIETKFPNAAGQNFCWYQCTIKGGRETRDLDVCQLVQAVEAMGAGEILLNCIDKDGSNSGFDLELINHVKAAVKIPVIASSGAGMPKHFEEVFDQTTTDAALGAGMFHRGEYTVGEVKQYLEDRGFLVRRFEPDV.

One can recognise a Glutamine amidotransferase type-1 domain in the interval 3 to 223 (TVHLLDYVAG…QLHSVTLEDS (221 aa)). Catalysis depends on for GATase activity residues cysteine 81, histidine 194, and glutamate 196. Residues 232–553 (LTRRIIACLD…FLVRRFEPDV (322 aa)) form a cyclase region. Residues aspartate 241 and aspartate 403 contribute to the active site.

In the C-terminal section; belongs to the HisA/HisF family.

The catalysed reaction is 5-[(5-phospho-1-deoxy-D-ribulos-1-ylimino)methylamino]-1-(5-phospho-beta-D-ribosyl)imidazole-4-carboxamide + L-glutamine = D-erythro-1-(imidazol-4-yl)glycerol 3-phosphate + 5-amino-1-(5-phospho-beta-D-ribosyl)imidazole-4-carboxamide + L-glutamate + H(+). The enzyme catalyses L-glutamine + H2O = L-glutamate + NH4(+). Its pathway is amino-acid biosynthesis; L-histidine biosynthesis; L-histidine from 5-phospho-alpha-D-ribose 1-diphosphate: step 5/9. IGPS catalyzes the conversion of PRFAR and glutamine to IGP, AICAR and glutamate. The glutaminase domain produces the ammonia necessary for the cyclase domain to produce IGP and AICAR from PRFAR. The ammonia is channeled to the active site of the cyclase domain. This Emericella nidulans (strain FGSC A4 / ATCC 38163 / CBS 112.46 / NRRL 194 / M139) (Aspergillus nidulans) protein is Imidazole glycerol phosphate synthase hisHF (hisHF).